Reading from the N-terminus, the 2118-residue chain is Cilia- and flagella-associated protein 65 (2118 aa).

A helical membrane pass occupies residues 6-26 (GSLRALLLAAAAAAAAAAGAV). The region spanning 615–736 (FLHSNPEFGP…HTPRLTTDLP (122 aa)) is the MSP domain. Disordered regions lie at residues 1007–1029 (APLLTGPNRPPSGGAGPRPLDAG), 1764–1909 (SGGS…DDFA), and 1924–1958 (AGGGMGSPQPVDPGGSAAAAASELAPPALPPAPPR). The segment covering 1825 to 1834 (GGAGGAPGGD) has biased composition (gly residues). A compositionally biased stretch (low complexity) spans 1840-1849 (RPGTPSMTAA). Over residues 1850-1859 (AHHHHHHPRH) the composition is skewed to basic residues. Composition is skewed to low complexity over residues 1892-1902 (SISGAPDPDSA) and 1936-1949 (PGGSAAAAASELAP). The stretch at 2016–2045 (AVRAAAEAARAEAEARAAAEAATKAAAEAE) forms a coiled coil.

The protein belongs to the CFAP65 family.

The protein localises to the cell projection. Its subcellular location is the cilium. It is found in the flagellum membrane. The protein resides in the cytoplasm. Its function is as follows. May play a role in flagellar formation and mobility. The chain is Cilia- and flagella-associated protein 65 from Chlamydomonas reinhardtii (Chlamydomonas smithii).